The chain runs to 372 residues: Chloromuconate cycloisomerase (372 aa).

Lys-158 (proton acceptor) is an active-site residue. Mn(2+) is bound by residues Asp-187, Glu-213, and Asp-238. The Proton donor role is filled by Glu-316.

The protein belongs to the mandelate racemase/muconate lactonizing enzyme family. The cofactor is Mn(2+).

It catalyses the reaction 2-[(2R)-2-chloro-2,5-dihydro-5-oxofuryl]acetate = 3-chloro-cis,cis-muconate + H(+). Its pathway is aromatic compound metabolism; 3-chlorocatechol degradation. This is Chloromuconate cycloisomerase (tfdDII) from Cupriavidus pinatubonensis (strain JMP 134 / LMG 1197) (Cupriavidus necator (strain JMP 134)).